A 517-amino-acid polypeptide reads, in one-letter code: Glucans biosynthesis protein G (517 aa).

An N-terminal signal peptide occupies residues 1–28 (MKHKLQMMKMRWLSAAVMLTLYTSSSWA).

It belongs to the OpgD/OpgG family.

The protein localises to the periplasm. It participates in glycan metabolism; osmoregulated periplasmic glucan (OPG) biosynthesis. In terms of biological role, involved in the biosynthesis of osmoregulated periplasmic glucans (OPGs). This chain is Glucans biosynthesis protein G, found in Escherichia coli O1:K1 / APEC.